The primary structure comprises 248 residues: tRNA pseudouridine synthase A (248 aa).

The Nucleophile role is filled by Asp-53. Position 111 (Tyr-111) interacts with substrate.

Belongs to the tRNA pseudouridine synthase TruA family. Homodimer.

It carries out the reaction uridine(38/39/40) in tRNA = pseudouridine(38/39/40) in tRNA. Its function is as follows. Formation of pseudouridine at positions 38, 39 and 40 in the anticodon stem and loop of transfer RNAs. The protein is tRNA pseudouridine synthase A of Listeria welshimeri serovar 6b (strain ATCC 35897 / DSM 20650 / CCUG 15529 / CIP 8149 / NCTC 11857 / SLCC 5334 / V8).